The chain runs to 433 residues: Pyrimidine-nucleoside phosphorylase (433 aa).

81–83 (KHS) lines the phosphate pocket. K(+) is bound by residues Gly-88 and Thr-90. Phosphate-binding positions include Thr-92, 108–110 (KMS), and Thr-120. Residues Arg-168 and Lys-187 each coordinate substrate. K(+)-binding residues include Leu-243, Ala-246, and Glu-255.

Belongs to the thymidine/pyrimidine-nucleoside phosphorylase family. As to quaternary structure, homodimer. K(+) is required as a cofactor.

The enzyme catalyses uridine + phosphate = alpha-D-ribose 1-phosphate + uracil. It catalyses the reaction thymidine + phosphate = 2-deoxy-alpha-D-ribose 1-phosphate + thymine. It carries out the reaction 2'-deoxyuridine + phosphate = 2-deoxy-alpha-D-ribose 1-phosphate + uracil. Functionally, catalyzes phosphorolysis of the pyrimidine nucleosides uridine, thymidine and 2'-deoxyuridine with the formation of the corresponding pyrimidine base and ribose-1-phosphate. In Staphylococcus aureus (strain bovine RF122 / ET3-1), this protein is Pyrimidine-nucleoside phosphorylase (pdp).